Consider the following 203-residue polypeptide: MEDLTEKQSLVFEFIMEYTADHGYPPTVRELCDELGFKSPNTAHFHLKGLKDKGYIQSAKGKNRGITVLKTPPGAGGKIPLVGRIAAGAPILAVENVMDTLDVDRAFFGSSDAFSVRVEGDSMIEAHIEDGDYVVIKPTATPRNGDIVAALVNDEVTLKYFHRDGSRIELRPANVRYKPFCYTEEDFIDVRVLGVMAGLIRKV.

Residues 28–48 (VRELCDELGFKSPNTAHFHLK) constitute a DNA-binding region (H-T-H motif). Residues Ser122 and Lys159 each act as for autocatalytic cleavage activity in the active site.

The protein belongs to the peptidase S24 family. Homodimer.

It catalyses the reaction Hydrolysis of Ala-|-Gly bond in repressor LexA.. Its function is as follows. Represses a number of genes involved in the response to DNA damage (SOS response), including recA and lexA. In the presence of single-stranded DNA, RecA interacts with LexA causing an autocatalytic cleavage which disrupts the DNA-binding part of LexA, leading to derepression of the SOS regulon and eventually DNA repair. This is LexA repressor from Desulfatibacillum aliphaticivorans.